A 340-amino-acid polypeptide reads, in one-letter code: tRNA-specific 2-thiouridylase MnmA (340 aa).

ATP contacts are provided by residues 6–13 (AMSGGVDS) and Met32. The active-site Nucleophile is Cys92. Residues Cys92 and Cys186 are joined by a disulfide bond. Gly116 lines the ATP pocket. An interaction with tRNA region spans residues 134–136 (KDQ). Cys186 (cysteine persulfide intermediate) is an active-site residue. Residues 288 to 289 (RY) are interaction with tRNA.

The protein belongs to the MnmA/TRMU family.

It localises to the cytoplasm. The catalysed reaction is S-sulfanyl-L-cysteinyl-[protein] + uridine(34) in tRNA + AH2 + ATP = 2-thiouridine(34) in tRNA + L-cysteinyl-[protein] + A + AMP + diphosphate + H(+). In terms of biological role, catalyzes the 2-thiolation of uridine at the wobble position (U34) of tRNA, leading to the formation of s(2)U34. The protein is tRNA-specific 2-thiouridylase MnmA of Campylobacter concisus (strain 13826).